Consider the following 38-residue polypeptide: MNKPNPNKQTVELNRTSLYWGLLLIFVLAVLFSSYIFN.

A helical transmembrane segment spans residues 17 to 37 (SLYWGLLLIFVLAVLFSSYIF).

This sequence belongs to the PsbL family. PSII is composed of 1 copy each of membrane proteins PsbA, PsbB, PsbC, PsbD, PsbE, PsbF, PsbH, PsbI, PsbJ, PsbK, PsbL, PsbM, PsbT, PsbX, PsbY, PsbZ, Psb30/Ycf12, at least 3 peripheral proteins of the oxygen-evolving complex and a large number of cofactors. It forms dimeric complexes.

It localises to the plastid. It is found in the chloroplast thylakoid membrane. In terms of biological role, one of the components of the core complex of photosystem II (PSII). PSII is a light-driven water:plastoquinone oxidoreductase that uses light energy to abstract electrons from H(2)O, generating O(2) and a proton gradient subsequently used for ATP formation. It consists of a core antenna complex that captures photons, and an electron transfer chain that converts photonic excitation into a charge separation. This subunit is found at the monomer-monomer interface and is required for correct PSII assembly and/or dimerization. This is Photosystem II reaction center protein L from Tupiella akineta (Green alga).